The chain runs to 354 residues: Opsin-1, short-wave-sensitive 2 (354 aa).

Residues 1 to 43 (MKQQQQTPELFEDFHMPITLDVSNISAYSPFLVPQDHLGHSGV) are Extracellular-facing. N-linked (GlcNAc...) asparagine glycosylation is present at Asn-24. Residues 44 to 68 (FMGMSAFMLFLFIAGTAINVLTIVC) traverse the membrane as a helical segment. Over 69 to 80 (TIQYKKLRSHLN) the chain is Cytoplasmic. A helical membrane pass occupies residues 81 to 106 (YILVNLAISNLWVSVFGSSVAFYAFY). Residues 107-120 (KKYFVFGPIGCKIE) lie on the Extracellular side of the membrane. An intrachain disulfide couples Cys-117 to Cys-194. A helical transmembrane segment spans residues 121–140 (GFTSTIGGMVSLWSLAVVAL). The Cytoplasmic segment spans residues 141–159 (ERWLVICKPLGNFTFKTPH). The helical transmembrane segment at 160–183 (AIAGCILPWCMALAAGLPPLLGWS) threads the bilayer. The Extracellular segment spans residues 184–209 (RYIPEGLQCSCGPDWYTTNNKFNNES). Asn-207 is a glycosylation site (N-linked (GlcNAc...) asparagine). A helical transmembrane segment spans residues 210-237 (YVMFLFCFCFAVPFSTIVFCYGQLLITL). Over 238 to 259 (KLAAKAQADSASTQKAEREVTK) the chain is Cytoplasmic. A helical membrane pass occupies residues 260-283 (MVVVMVFGFLICWGPYAIFAIWVV). Topologically, residues 284-291 (SNRGAPFD) are extracellular. Residues 292–316 (LRLATIPSCLCKASTVYNPVIYVLM) form a helical membrane-spanning segment. The residue at position 303 (Lys-303) is an N6-(retinylidene)lysine. Residues 317–354 (NKQFRSCMMKMVFNKNIEEDEASSSSQVTQVSSVAPEK) are Cytoplasmic-facing.

Belongs to the G-protein coupled receptor 1 family. Opsin subfamily. Post-translationally, phosphorylated on some or all of the serine and threonine residues present in the C-terminal region. As to expression, retinal long single cone outer segments.

It localises to the membrane. In terms of biological role, visual pigments are the light-absorbing molecules that mediate vision. They consist of an apoprotein, opsin, covalently linked to cis-retinal. The protein is Opsin-1, short-wave-sensitive 2 (opn1sw2) of Danio rerio (Zebrafish).